The following is a 361-amino-acid chain: Protein SSUH2 homolog (361 aa).

The protein resides in the cytoplasm. It is found in the nucleus. Functionally, plays a role in odontogenesis. This is Protein SSUH2 homolog from Danio rerio (Zebrafish).